We begin with the raw amino-acid sequence, 601 residues long: Probable HECT-type ubiquitin ligase-interacting protein creD (601 aa).

2 disordered regions span residues 374-397 (EVDPSGYRTPGPGSGPGTPFGTLS) and 454-496 (VSTD…GMAT). Residues 455–473 (STDSFGPSSGSNSQSPASP) are compositionally biased toward low complexity. Positions 475 to 489 (LSRRPSDEGYHDHDY) are enriched in basic and acidic residues.

This sequence belongs to the arrestin family. As to quaternary structure, interacts with hulA.

Component of the regulatory network controlling carbon source utilization through ubiquitination and deubiquitination involving creA, creB, creC, creD and acrB. May be involved in signaling by recognizing appropriately phosphorylated substrates via its arrestin domains and then recruit a HECT-type ubiquitin ligase such as hulA, leading to ubiquitination of the substrate, providing a link between ubiquitination and phosphorylation in protein regulation and stability. The protein is Probable HECT-type ubiquitin ligase-interacting protein creD (creD) of Aspergillus fumigatus (strain CBS 144.89 / FGSC A1163 / CEA10) (Neosartorya fumigata).